Reading from the N-terminus, the 218-residue chain is MHRSPLAWLRLLLAAVLGAFLLGGPLHAAETAAPRSPAWAQAVDPSINLYRMSPTLYRSALPNAQSVALLQRLQVKTVVSFIKDDDRAWLGQAPVRVVSLPTHADRVDDAEVLSVLRQLQAAEREGPVLMHCKHGNNRTGLFAAMYRIVVQGWDKQAALEEMQRGGFGDEDDMRDASAYVRGADVDGLRLAMANGECSPSRFALCHVREWMAQALDRP.

The signal sequence occupies residues 1-28 (MHRSPLAWLRLLLAAVLGAFLLGGPLHA). The 145-residue stretch at 44 to 188 (DPSINLYRMS…YVRGADVDGL (145 aa)) folds into the Tyrosine-protein phosphatase domain. The Proton donor/acceptor role is filled by D105. C132 functions as the Phosphocysteine intermediate in the catalytic mechanism.

Belongs to the protein-tyrosine phosphatase family. Monomer in solution.

It is found in the periplasm. It catalyses the reaction O-phospho-L-tyrosyl-[protein] + H2O = L-tyrosyl-[protein] + phosphate. It carries out the reaction O-phospho-L-threonyl-[protein] + H2O = L-threonyl-[protein] + phosphate. The catalysed reaction is O-phospho-L-seryl-[protein] + H2O = L-seryl-[protein] + phosphate. With respect to regulation, the phosphatase activity is completely inhibited by trisodium orthovanadate, a tyrosine phosphatase specific inhibitor. Functionally, phosphatase that regulates diverse phenotypes in P.aeruginosa via regulation of the concentration of cellular c-di-GMP. Acts by dephosphorylating the membrane-anchored diguanylate cyclase TpbB at tyrosine and serine/threonine sites, leading to inactivation of TpbB and reduced c-di-GMP production. The reduced cellular c-di-GMP concentration leads to reduced adhesin expression, reduced extracellular polysaccharide (EPS) production, pellicule production, cell aggregation and biofilm formation, and enhanced swimming and swarming. It affects colony morphology and controls rugose colony formation. TpbA also acts as a positive regulator of extracellular DNA (eDNA, a major component of the biofilm matrix) and cell lysis by reducing c-di-GMP concentrations. In vitro shows phosphatase activity toward p-nitrophenyl phosphate (pNPP), tyrosine phosphopeptides and a threonine phosphopeptide. Does not have phosphodiesterases (PDE) activity, and cannot degrade c-di-GMP. This chain is Dual specificity protein phosphatase TpbA, found in Pseudomonas aeruginosa (strain UCBPP-PA14).